The following is an 89-amino-acid chain: cAMP-regulated phosphoprotein 21 (89 aa).

The interval 1–89 (MSEPGDLSQT…GGESLQDQTL (89 aa)) is disordered. The residue at position 2 (serine 2) is an N-acetylserine. A phosphoserine mark is found at serine 33 and serine 56.

As to quaternary structure, interacts with CALM1. In terms of processing, phosphorylation at Ser-56 favors interaction with CALM1.

It localises to the cytoplasm. Functionally, may act as a competitive inhibitor of calmodulin-dependent enzymes such as calcineurin in neurons. In Bos taurus (Bovine), this protein is cAMP-regulated phosphoprotein 21 (ARPP21).